The following is a 309-amino-acid chain: tRNA pseudouridine synthase B (309 aa).

Aspartate 51 acts as the Nucleophile in catalysis.

This sequence belongs to the pseudouridine synthase TruB family. Type 1 subfamily.

It catalyses the reaction uridine(55) in tRNA = pseudouridine(55) in tRNA. Functionally, responsible for synthesis of pseudouridine from uracil-55 in the psi GC loop of transfer RNAs. The sequence is that of tRNA pseudouridine synthase B from Coxiella burnetii (strain RSA 493 / Nine Mile phase I).